Consider the following 390-residue polypeptide: Succinyl-diaminopimelate desuccinylase 1 (390 aa).

A Zn(2+)-binding site is contributed by histidine 76. Aspartate 78 is an active-site residue. Position 109 (aspartate 109) interacts with Zn(2+). Residue glutamate 143 is the Proton acceptor of the active site. Zn(2+) contacts are provided by glutamate 144, glutamate 172, and histidine 363.

It belongs to the peptidase M20A family. DapE subfamily. Homodimer. Requires Zn(2+) as cofactor. Co(2+) serves as cofactor.

The catalysed reaction is N-succinyl-(2S,6S)-2,6-diaminopimelate + H2O = (2S,6S)-2,6-diaminopimelate + succinate. The protein operates within amino-acid biosynthesis; L-lysine biosynthesis via DAP pathway; LL-2,6-diaminopimelate from (S)-tetrahydrodipicolinate (succinylase route): step 3/3. Catalyzes the hydrolysis of N-succinyl-L,L-diaminopimelic acid (SDAP), forming succinate and LL-2,6-diaminopimelate (DAP), an intermediate involved in the bacterial biosynthesis of lysine and meso-diaminopimelic acid, an essential component of bacterial cell walls. The polypeptide is Succinyl-diaminopimelate desuccinylase 1 (Alteromonas mediterranea (strain DSM 17117 / CIP 110805 / LMG 28347 / Deep ecotype)).